A 196-amino-acid polypeptide reads, in one-letter code: Early light-induced protein, chloroplastic (196 aa).

The N-terminal 48 residues, 1–48, are a transit peptide targeting the chloroplast; it reads MAVSSCQSIMSNSMTNISSRSRVNQFTNIPSVYIPTLRRNVSLKVRSM. Over residues 47 to 57 the composition is skewed to basic and acidic residues; sequence SMAEGEPKEQS. The interval 47–81 is disordered; it reads SMAEGEPKEQSKVAVDPTTPTASTPTPQPAYTRPP. 3 helical membrane-spanning segments follow: residues 105–125, 132–152, and 176–196; these read LAMI…QGLS, GVAW…IPFF, and IAML…TSLV.

Belongs to the ELIP/psbS family.

It localises to the plastid. The protein resides in the chloroplast membrane. Its function is as follows. Probably involved in the integration of pigments into the mature pigment-protein complexes. The polypeptide is Early light-induced protein, chloroplastic (Pisum sativum (Garden pea)).